Consider the following 147-residue polypeptide: MNNPDDVLLINRFLRQQHVLTLCAGSGMDMWCASCFYVFDENQMALFLMTEKHTRHSELMLINPQVAGTVATQSRTIALIKGIQYRGDISLLSGDAEQAARNRYCRRFPVAKVSSAPLWQLNLLEIKMTNNALGFGKKLHWSRVEPL.

The protein belongs to the UPF0306 family.

This is UPF0306 protein YPTB0506 from Yersinia pseudotuberculosis serotype I (strain IP32953).